Reading from the N-terminus, the 162-residue chain is Transcription elongation factor GreA (162 aa).

Residues 45-74 (ENAEYEAAREKQAFIEGRIKELEDMTARAE) adopt a coiled-coil conformation.

This sequence belongs to the GreA/GreB family.

Its function is as follows. Necessary for efficient RNA polymerase transcription elongation past template-encoded arresting sites. The arresting sites in DNA have the property of trapping a certain fraction of elongating RNA polymerases that pass through, resulting in locked ternary complexes. Cleavage of the nascent transcript by cleavage factors such as GreA or GreB allows the resumption of elongation from the new 3'terminus. GreA releases sequences of 2 to 3 nucleotides. The sequence is that of Transcription elongation factor GreA from Rickettsia typhi (strain ATCC VR-144 / Wilmington).